The chain runs to 1284 residues: 1,6-alpha-glucosyltransferase (1284 aa).

An N-terminal signal peptide occupies residues 1–35; sequence MRPPNKEIPRILAFFTAFTLFGSTLALLPAPPAHA. Aspartate 433 functions as the Nucleophile in the catalytic mechanism. The active site involves aspartate 436. Residue aspartate 495 is the Proton donor of the active site. 2 CBM6 domains span residues 856–988 and 994–1120; these read SQYE…ITVP and GKYE…LLLS.

Belongs to the glycosyl hydrolase 31 family.

The protein resides in the secreted. It carries out the reaction 2 D-maltotetraose = alpha-isomaltosyl-(1-&gt;4)-D-maltotriose + D-maltotriose. It catalyses the reaction Transfers an alpha-D-glucosyl residue in a (1-&gt;4)-alpha-D-glucan to the primary hydroxy group of glucose, free or combined in a (1-&gt;4)-alpha-D-glucan.. Its activity is regulated as follows. Strongly activated and stabilized by various divalent cations. Strongly inhibited by Cu(2+), Hg(2+) and EDTA, and moderately inhibited by Tris. Functionally, glycosyltransferase involved, together with CtsY, in the conversion of alpha-1,4-glucan into a cyclic tetrasaccharide (CTS) constructed from four alpha-glucopyranosyl residues. Catalyzes an intermolecular transglucosylation in which a glucose residue at the non-reducing end of maltotetraose is transferred to the 6-OH of an other non-reducing glucose, leading to the formation of alpha-isomaltosyl-(1-&gt;4)-D-maltotriose. Has a wide substrate specificity, and acts on oligosaccharides with alpha-1,4-glucosidic linkages at the non-reducing end, except for maltose. In contrast, has little activity toward oligosaccharides with alpha-1,6-glucosidic linkages at the non-reducing end. The sequence is that of 1,6-alpha-glucosyltransferase from Sporosarcina globispora (Bacillus globisporus).